Consider the following 223-residue polypeptide: Cytidylate kinase (223 aa).

G17–T25 provides a ligand contact to ATP.

Belongs to the cytidylate kinase family. Type 1 subfamily.

The protein localises to the cytoplasm. It catalyses the reaction CMP + ATP = CDP + ADP. The enzyme catalyses dCMP + ATP = dCDP + ADP. This Bordetella bronchiseptica (strain ATCC BAA-588 / NCTC 13252 / RB50) (Alcaligenes bronchisepticus) protein is Cytidylate kinase.